The sequence spans 711 residues: Nucleolin (711 aa).

Residues 1–304 (MVKLAKAGKN…KKQKVEGTEP (304 aa)) are disordered. N6-acetyllysine is present on residues Lys-9, Lys-15, and Lys-16. Residues 24–43 (VEEDSEDEEMSEDEEDDSSG) are compositionally biased toward acidic residues. Ser-28, Ser-34, Ser-41, and Ser-42 each carry phosphoserine. Positions 56 to 107 (AAATSAKKVVVSPTKKVAVATPAKKAAVTPGKKAAATPAKKTVTPAKAVATP) are enriched in low complexity. The stretch at 58–65 (ATSAKKVV) is repeat 1. The tract at residues 58 to 135 (ATSAKKVVVS…GAAIPAKGAK (78 aa)) is 8 X 8 AA tandem repeats of X-T-P-X-K-K-X-X. Ser-67 is subject to Phosphoserine. A phosphothreonine mark is found at Thr-69, Thr-76, Thr-84, and Thr-92. 3 repeat units span residues 75-82 (ATPAKKAA), 83-90 (VTPGKKAA), and 91-98 (ATPAKKTV). Position 96 is an N6-acetyllysine (Lys-96). The residue at position 99 (Thr-99) is a Phosphothreonine. A 5; truncated repeat occupies 99 to 104 (TPAKAV). Lys-102 is modified (N6-acetyllysine). Repeat 6 spans residues 105–112 (ATPGKKGA). Residue Thr-106 is modified to Phosphothreonine. An N6-acetyllysine modification is found at Lys-109. The residue at position 113 (Thr-113) is a Phosphothreonine. Position 116 is an N6-acetyllysine (Lys-116). Repeat copies occupy residues 120 to 127 (ATPGKKGA) and 128 to 135 (AIPAKGAK). Thr-121 is subject to Phosphothreonine. Residues 122–137 (PGKKGAAIPAKGAKNG) are compositionally biased toward low complexity. Position 124 is an N6-acetyllysine (Lys-124). Phosphoserine occurs at positions 145, 153, 184, and 207. 2 stretches are compositionally biased toward acidic residues: residues 145–171 (SDEE…DEIE) and 184–212 (SEDE…EEAM). Residue Thr-215 is modified to Phosphothreonine. Residues 235–273 (EDEDEEEDDEDEDDDDDEDDEDEDDDDEDEEEEEEEEEP) are compositionally biased toward acidic residues. Residues 274-301 (VKEAPGKRKKEMAKQKAAPEAKKQKVEG) are compositionally biased toward basic and acidic residues. Lys-298 participates in a covalent cross-link: Glycyl lysine isopeptide (Lys-Gly) (interchain with G-Cter in SUMO1); alternate. A Glycyl lysine isopeptide (Lys-Gly) (interchain with G-Cter in SUMO2); alternate cross-link involves residue Lys-298. Thr-302 is modified (phosphothreonine). RRM domains follow at residues 308–384 (FNLF…KPKG) and 394–467 (RTLL…YTGE). At Lys-319 the chain carries N6-acetyllysine. Lys-325 participates in a covalent cross-link: Glycyl lysine isopeptide (Lys-Gly) (interchain with G-Cter in SUMO1); alternate. A Glycyl lysine isopeptide (Lys-Gly) (interchain with G-Cter in SUMO2); alternate cross-link involves residue Lys-325. At Lys-349 the chain carries N6-acetyllysine. Ser-357 carries the post-translational modification Phosphoserine. Position 368 is a phosphothreonine (Thr-368). Lys-371 is covalently cross-linked (Glycyl lysine isopeptide (Lys-Gly) (interchain with G-Cter in SUMO2)). Lys-378 participates in a covalent cross-link: Glycyl lysine isopeptide (Lys-Gly) (interchain with G-Cter in SUMO2); alternate. Lys-378 bears the N6-acetyllysine; alternate mark. N6-acetyllysine occurs at positions 399 and 404. Thr-406 is modified (phosphothreonine). Lys-428 and Lys-445 each carry N6-acetyllysine. Phosphoserine occurs at positions 459 and 461. Lys-468 and Lys-478 each carry N6-acetyllysine. One can recognise an RRM 3 domain in the interval 487 to 561 (KTLVLSNLSY…RAIRLELQGP (75 aa)). Lys-514 participates in a covalent cross-link: Glycyl lysine isopeptide (Lys-Gly) (interchain with G-Cter in SUMO2); alternate. The residue at position 514 (Lys-514) is an N6-acetyllysine; alternate. N6-acetyllysine is present on Lys-522. The residue at position 564 (Ser-564) is a Phosphoserine. At Lys-573 the chain carries N6-acetyllysine. The 76-residue stretch at 573 to 648 (KTLFVKGLSE…NKVTLDWAKP (76 aa)) folds into the RRM 4 domain. Lys-578 is covalently cross-linked (Glycyl lysine isopeptide (Lys-Gly) (interchain with G-Cter in SUMO2); alternate). N6-acetyllysine; alternate is present on Lys-578. Phosphoserine is present on Ser-581. A Glycyl lysine isopeptide (Lys-Gly) (interchain with G-Cter in SUMO1); alternate cross-link involves residue Lys-590. Lys-590 participates in a covalent cross-link: Glycyl lysine isopeptide (Lys-Gly) (interchain with G-Cter in SUMO2); alternate. Phosphoserine occurs at positions 592 and 620. Lys-625 is covalently cross-linked (Glycyl lysine isopeptide (Lys-Gly) (interchain with G-Cter in SUMO2)). The segment at 641–711 (VTLDWAKPKG…KPQGKKTKFE (71 aa)) is disordered. Lys-647 is modified (N6-acetyllysine). Positions 651-697 (EGGFGGRGGGRGGFGGRGGGRGGRGGFGGRGRGGFGGRGGFRGGRGG) are enriched in gly residues. 9 positions are modified to asymmetric dimethylarginine: Arg-657, Arg-661, Arg-667, Arg-671, Arg-674, Arg-680, Arg-682, Arg-688, and Arg-692. Arg-695 bears the Asymmetric dimethylarginine; alternate mark. Arg-695 bears the Omega-N-methylarginine; alternate mark. A compositionally biased stretch (basic and acidic residues) spans 698–711 (GGDHKPQGKKTKFE).

As to quaternary structure, identified in a IGF2BP1-dependent mRNP granule complex containing untranslated mRNAs. Component of the SWAP complex that consists of NPM1, NCL/nucleolin, PARP1 and SWAP70. Component of a complex which is at least composed of HTATSF1/Tat-SF1, the P-TEFb complex components CDK9 and CCNT1, RNA polymerase II, SUPT5H, and NCL/nucleolin. Interacts with AICDA. Interacts with APTX. Interacts with C1QBP. Interacts with ERBB4. Interacts (via C-terminus) with FMR1 isoform 6 (via N-terminus). Interacts with GZF1; this interaction is important for nucleolar localization of GZF1. Interacts with NSUN2. Interacts with NVL. Interacts (via N-terminus domain) with SETX. Interacts (via RRM1 and C-terminal RRM4/Arg/Gly-rich domains) with TERT; the interaction is important for nucleolar localization of TERT. Interacts with WDR46. Interacts with ZFP36. Interacts with LRRC34. Interacts with RRP1B. Interacts with HNRNPU; this interaction occurs during mitosis. Interacts with RIOK1; RIOK1 recruits NCL to PRMT5 for symmetrically methylation. Interacts with ZBTB7B. Interacts with MDK; this interaction promotes NCL clustering and lateral movements of this complex into lipid rafts leading to MDK internalization. Interacts with HDGF. Interacts with ALKBH2. Interacts with IGFBP5; this interaction is necessary for IGFBP5 localization to the nucleus. In terms of processing, some glutamate residues are glycylated by TTLL8. This modification occurs exclusively on glutamate residues and results in a glycine chain on the gamma-carboxyl group. Post-translationally, symmetrically methylated by PRMT5.

It localises to the nucleus. It is found in the nucleolus. The protein localises to the cytoplasm. Nucleolin is the major nucleolar protein of growing eukaryotic cells. It is found associated with intranucleolar chromatin and pre-ribosomal particles. It induces chromatin decondensation by binding to histone H1. It is thought to play a role in pre-rRNA transcription and ribosome assembly. May play a role in the process of transcriptional elongation. Binds RNA oligonucleotides with 5'-UUAGGG-3' repeats more tightly than the telomeric single-stranded DNA 5'-TTAGGG-3' repeats. This chain is Nucleolin (NCL), found in Macaca fascicularis (Crab-eating macaque).